A 303-amino-acid chain; its full sequence is BAG family molecular chaperone regulator 3 (303 aa).

A compositionally biased stretch (polar residues) spans Met1–Ser11. Residues Met1–Gly27 are disordered. The Ubiquitin-like domain occupies Phe45–Gln119. The region spanning Ser138–Lys216 is the BAG domain. Residues Val249–Pro268 are disordered. Residues Asn258–Thr267 are compositionally biased toward polar residues. Ser263 is subject to Phosphoserine.

In terms of assembly, binds to the ATPase domain of HSP70/HSC70 chaperones. Interacts with HSP70-1.

Functionally, co-chaperone that regulates diverse cellular pathways, such as programmed cell death and stress responses. This Arabidopsis thaliana (Mouse-ear cress) protein is BAG family molecular chaperone regulator 3 (BAG3).